A 243-amino-acid polypeptide reads, in one-letter code: Transmembrane protein 174 (243 aa).

The next 2 membrane-spanning stretches (helical) occupy residues 40-60 and 73-93; these read LLFS…MGWI and LLGP…VCKF.

As to quaternary structure, interacts with SLC34A1; regulates SLC34A1 internalization by PTH and FGF23.

Its subcellular location is the endoplasmic reticulum membrane. The protein localises to the apical cell membrane. Regulator of plasma phosphate homeostasis. Decreases serum inorganic phosphate (Pi) uptake by regulating the sodium-phosphate cotransporter SLC34A1 trafficking by PTH and FGF23 in the kidney. The sequence is that of Transmembrane protein 174 (TMEM174) from Pongo abelii (Sumatran orangutan).